A 123-amino-acid polypeptide reads, in one-letter code: Large ribosomal subunit protein bL19 (123 aa).

It belongs to the bacterial ribosomal protein bL19 family.

Its function is as follows. This protein is located at the 30S-50S ribosomal subunit interface and may play a role in the structure and function of the aminoacyl-tRNA binding site. This Ureaplasma parvum serovar 3 (strain ATCC 27815 / 27 / NCTC 11736) protein is Large ribosomal subunit protein bL19.